We begin with the raw amino-acid sequence, 938 residues long: Isoleucine--tRNA ligase (938 aa).

A 'HIGH' region motif is present at residues 58 to 68 (PYANGSIHIGH). The residue at position 183 (K183) is an N6-acetyllysine. E561 lines the L-isoleucyl-5'-AMP pocket. The 'KMSKS' region signature appears at 602 to 606 (KMSKS). Residue K605 participates in ATP binding. The Zn(2+) site is built by C901, C904, C921, and C924.

The protein belongs to the class-I aminoacyl-tRNA synthetase family. IleS type 1 subfamily. In terms of assembly, monomer. Zn(2+) is required as a cofactor.

It localises to the cytoplasm. The catalysed reaction is tRNA(Ile) + L-isoleucine + ATP = L-isoleucyl-tRNA(Ile) + AMP + diphosphate. Catalyzes the attachment of isoleucine to tRNA(Ile). As IleRS can inadvertently accommodate and process structurally similar amino acids such as valine, to avoid such errors it has two additional distinct tRNA(Ile)-dependent editing activities. One activity is designated as 'pretransfer' editing and involves the hydrolysis of activated Val-AMP. The other activity is designated 'posttransfer' editing and involves deacylation of mischarged Val-tRNA(Ile). This is Isoleucine--tRNA ligase from Shigella dysenteriae serotype 1 (strain Sd197).